A 733-amino-acid polypeptide reads, in one-letter code: Protein ROG3 (733 aa).

Positions Pro-460–Tyr-463 match the PY-motif motif. The tract at residues Arg-518–Pro-566 is disordered. Low complexity predominate over residues Leu-523–Leu-540. The PY-motif motif lies at Pro-625 to Tyr-628. 2 disordered regions span residues Gln-636–Thr-658 and Glu-693–Arg-733. Residues Arg-646–Thr-658 show a composition bias toward low complexity.

Belongs to the arrestin family. In terms of assembly, interacts with RSP5 via its 2 PY-motifs.

Its function is as follows. Involved in resistance to GST substrate o-dinitrobenzene (o-DNB). In Saccharomyces cerevisiae (strain ATCC 204508 / S288c) (Baker's yeast), this protein is Protein ROG3 (ROG3).